The chain runs to 341 residues: NLNRTNWPKKIFNIYWNVPTYFCHQHDVYFNELTKFDIKYNPKGNYRGDTISLFYDPGNFPAMVPLKNGTYDIRNEGVPQKGNITVHLQQFTKELDEIYPKKISGGIGVINFNKWRPIFRRNVNNLKINKEVSIDLVRKEHPKWDKSMIETEASNRFEKSARIFMEKTLKLAKDIRNKNKWGYHGYPYCPTASTGNPSFDCDALAMNENDKLSWLFKYQDVLLPSVYVKHVLKPEEKIGLVRGSVKEAVRISKKFEHLPKVLSYWWYAYEDKMDTFLTETDVKNTFREILINGGDGIIIWGTMHDLNKEKCEKLKQYLSTILGPIAFKVMEAVKKRTPLNF.

N-linked (GlcNAc...) asparagine glycans are attached at residues Asn3, Asn68, and Asn83. Cystine bridges form between Cys23–Cys311 and Cys189–Cys201.

This sequence belongs to the glycosyl hydrolase 56 family. As to expression, expressed by the venom gland.

It localises to the secreted. It carries out the reaction Random hydrolysis of (1-&gt;4)-linkages between N-acetyl-beta-D-glucosamine and D-glucuronate residues in hyaluronate.. Functionally, may hydrolyze high molecular weight hyaluronic acid to produce small oligosaccharides. The chain is Hyaluronidase A from Vespa velutina (Asian yellow-legged hornet).